The following is a 400-amino-acid chain: Aspartate aminotransferase (400 aa).

2 residues coordinate L-aspartate: Gly42 and Asn180. Lys241 bears the N6-(pyridoxal phosphate)lysine mark. Arg373 is a binding site for L-aspartate.

It belongs to the class-I pyridoxal-phosphate-dependent aminotransferase family. Homodimer. It depends on pyridoxal 5'-phosphate as a cofactor.

It localises to the cytoplasm. It catalyses the reaction L-aspartate + 2-oxoglutarate = oxaloacetate + L-glutamate. The protein is Aspartate aminotransferase (aspC) of Sulfolobus acidocaldarius (strain ATCC 33909 / DSM 639 / JCM 8929 / NBRC 15157 / NCIMB 11770).